We begin with the raw amino-acid sequence, 469 residues long: Mitochondrial adenyl nucleotide antiporter SLC25A25 (469 aa).

The interval 1-165 (MLCLCLYVPI…LYWKHSTIFD (165 aa)) is regulatory N-terminal domain. Residues 1-189 (MLCLCLYVPI…ERQTGMWWRH (189 aa)) are Mitochondrial intermembrane-facing. EF-hand domains are found at residues 47-80 (TYRQ…QDHE), 78-113 (DHEK…LGVK), and 114-149 (ISEQ…HPVE). Ca(2+) is bound by residues D60, D62, D64, Q66, and E71. The linker region stretch occupies residues 151–160 (IPEIILYWKH). Residues 166 to 469 (VGENLTVPDE…LKITLGVQSR (304 aa)) form a C-terminal transmembrane transporter domain region. 3 Solcar repeats span residues 184 to 270 (GMWW…MKRL), 278 to 363 (LRIH…LKNT), and 375 to 463 (PGVF…LKIT). Residues 190 to 207 (LVAGGGAGAVSRTCTAPL) form a helical membrane-spanning segment. Residues 208–244 (DRLKVLMQVHASRSNNMCIIGGFTQMIREGGAKSLWR) are Mitochondrial matrix-facing. Residues 245 to 264 (GNGINVLKIAPESAIKFMAY) form a helical membrane-spanning segment. Residues 265–287 (EQMKRLVGSDQETLRIHERLVAG) lie on the Mitochondrial intermembrane side of the membrane. The helical transmembrane segment at 288–301 (SLAGAIAQSSIYPM) threads the bilayer. At 302–337 (EVLKTRMALRKTGQYSGMLDCAKRILAKEGVAAFYK) the chain is on the mitochondrial matrix side. The helical transmembrane segment at 338–357 (GYIPNMLGIIPYAGIDLAVY) threads the bilayer. The Mitochondrial intermembrane portion of the chain corresponds to 358 to 380 (ETLKNTWLQRYAVNSADPGVFVL). A helical transmembrane segment spans residues 381-398 (LACGTISSTCGQLASYPL). The Mitochondrial matrix portion of the chain corresponds to 399-437 (ALVRTRMQAQASIEGAPEVTMSSLFKQILRTEGAFGLYR). A helical transmembrane segment spans residues 438-457 (GLAPNFMKVIPAVSISYVVY). Topologically, residues 458–469 (ENLKITLGVQSR) are mitochondrial intermembrane.

This sequence belongs to the mitochondrial carrier (TC 2.A.29) family. Mainly present in the liver and the skeletal muscle (at protein level).

Its subcellular location is the mitochondrion inner membrane. The catalysed reaction is Mg(2+)(out) + phosphate(in) + ATP(out) = Mg(2+)(in) + phosphate(out) + ATP(in). With respect to regulation, activated by an increase in cytosolic calcium levels that induce a conformational change of the N-terminal regulatory domain, uncapping the channel and allowing transport. Its function is as follows. Electroneutral antiporter that most probably mediates the transport of adenyl nucleotides through the inner mitochondrial membrane. Originally identified as an ATP-magnesium/inorganic phosphate antiporter, it could have a broader specificity for adenyl nucleotides. By regulating the mitochondrial matrix adenyl nucleotide pool could adapt to changing cellular energetic demands and indirectly regulate adenyl nucleotide-dependent metabolic pathways. The protein is Mitochondrial adenyl nucleotide antiporter SLC25A25 of Rattus norvegicus (Rat).